The primary structure comprises 82 residues: ATP synthase subunit c, chloroplastic (82 aa).

2 helical membrane passes run 4 to 24 (IISA…AIGP) and 57 to 77 (LAFM…LLFA).

This sequence belongs to the ATPase C chain family. As to quaternary structure, F-type ATPases have 2 components, F(1) - the catalytic core - and F(0) - the membrane proton channel. F(1) has five subunits: alpha(3), beta(3), gamma(1), delta(1), epsilon(1). F(0) has four main subunits: a(1), b(1), b'(1) and c(10-14). The alpha and beta chains form an alternating ring which encloses part of the gamma chain. F(1) is attached to F(0) by a central stalk formed by the gamma and epsilon chains, while a peripheral stalk is formed by the delta, b and b' chains.

The protein localises to the plastid. It is found in the chloroplast thylakoid membrane. In terms of biological role, f(1)F(0) ATP synthase produces ATP from ADP in the presence of a proton or sodium gradient. F-type ATPases consist of two structural domains, F(1) containing the extramembraneous catalytic core and F(0) containing the membrane proton channel, linked together by a central stalk and a peripheral stalk. During catalysis, ATP synthesis in the catalytic domain of F(1) is coupled via a rotary mechanism of the central stalk subunits to proton translocation. Key component of the F(0) channel; it plays a direct role in translocation across the membrane. A homomeric c-ring of between 10-14 subunits forms the central stalk rotor element with the F(1) delta and epsilon subunits. The chain is ATP synthase subunit c, chloroplastic from Trieres chinensis (Marine centric diatom).